The chain runs to 707 residues: Vicilin-like seed storage protein At2g18540 (707 aa).

The N-terminal stretch at 1–24 is a signal peptide; it reads MSRFRILPLSIFLCFVSLFFCTES. The region spanning 42 to 185 is the Cupin type-1 1 domain; that stretch reads PLLVKKDQRT…AFAVPEDILR (144 aa). 6 N-linked (GlcNAc...) asparagine glycosylation sites follow: Asn-60, Asn-203, Asn-285, Asn-356, Asn-396, and Asn-399. The Cupin type-1 2 domain occupies 247-403; that stretch reads FNVFEEDPDF…SFNLSNETIK (157 aa). Over residues 439 to 696 the composition is skewed to basic and acidic residues; it reads EEEEIERRRK…KKEEEEEKRR (258 aa). The interval 439–707 is disordered; the sequence is EEEEIERRRK…PPQPKPPEEI (269 aa). Residues 698-707 are compositionally biased toward pro residues; the sequence is PPQPKPPEEI.

It belongs to the 7S seed storage protein family.

Functionally, seed storage protein. This Arabidopsis thaliana (Mouse-ear cress) protein is Vicilin-like seed storage protein At2g18540.